The chain runs to 231 residues: Regulatory protein VanR (231 aa).

The 114-residue stretch at 4–117 (KILIVDDEHE…ELIARVKAQL (114 aa)) folds into the Response regulatory domain. Asp-53 is modified (4-aspartylphosphate). Positions 131-231 (ENVIVHSGLV…VWGVGYKIEK (101 aa)) form a DNA-binding region, ompR/PhoB-type.

Monomer. In terms of processing, phosphorylated by VanS. Dephosphorylated by VanS. Can be phosphorylated nonenzymatically by acetyl-phosphate.

It localises to the cytoplasm. Functionally, member of the two-component regulatory system VanS/VanR. Binds to the promoter regions of target genes, including vanH and vanR; phosphorylation of VanR increases binding affinity to the vanH and vanR promoters significantly. DNA binding may be inhibited by the cognate sensor protein, VanS. Activates the transcription of vanH, vanA and vanX in response to vancomycin which results in vancomycin resistance. Involved in conferring vancomycin resistance. The chain is Regulatory protein VanR (vanR) from Enterococcus faecium (Streptococcus faecium).